The following is a 567-amino-acid chain: Urease subunit alpha (567 aa).

A Urease domain is found at 128 to 567; it reads GGVDTHVHYI…LPLAQRYHLF (440 aa). Residues histidine 133, histidine 135, and lysine 216 each contribute to the Ni(2+) site. At lysine 216 the chain carries N6-carboxylysine. Histidine 218 provides a ligand contact to substrate. 2 residues coordinate Ni(2+): histidine 245 and histidine 271. Histidine 319 (proton donor) is an active-site residue. Aspartate 359 is a binding site for Ni(2+).

It belongs to the metallo-dependent hydrolases superfamily. Urease alpha subunit family. Heterotrimer of UreA (gamma), UreB (beta) and UreC (alpha) subunits. Three heterotrimers associate to form the active enzyme. It depends on Ni cation as a cofactor. Carboxylation allows a single lysine to coordinate two nickel ions.

It localises to the cytoplasm. The enzyme catalyses urea + 2 H2O + H(+) = hydrogencarbonate + 2 NH4(+). It participates in nitrogen metabolism; urea degradation; CO(2) and NH(3) from urea (urease route): step 1/1. The chain is Urease subunit alpha from Pseudoalteromonas translucida (strain TAC 125).